Here is a 745-residue protein sequence, read N- to C-terminus: Phosphoribosylformylglycinamidine synthase subunit PurL (745 aa).

The active site involves histidine 54. ATP is bound by residues tyrosine 57 and lysine 96. Glutamate 98 contacts Mg(2+). Substrate is bound by residues 99-102 and arginine 121; that span reads SHNH. The Proton acceptor role is filled by histidine 100. Aspartate 122 lines the Mg(2+) pocket. Residue glutamine 250 coordinates substrate. Position 278 (aspartate 278) interacts with Mg(2+). Substrate is bound at residue 322-324; that stretch reads ESQ. Residues aspartate 503 and glycine 540 each contribute to the ATP site. Mg(2+) is bound at residue asparagine 541. Serine 543 is a binding site for substrate.

This sequence belongs to the FGAMS family. As to quaternary structure, monomer. Part of the FGAM synthase complex composed of 1 PurL, 1 PurQ and 2 PurS subunits.

Its subcellular location is the cytoplasm. It carries out the reaction N(2)-formyl-N(1)-(5-phospho-beta-D-ribosyl)glycinamide + L-glutamine + ATP + H2O = 2-formamido-N(1)-(5-O-phospho-beta-D-ribosyl)acetamidine + L-glutamate + ADP + phosphate + H(+). It participates in purine metabolism; IMP biosynthesis via de novo pathway; 5-amino-1-(5-phospho-D-ribosyl)imidazole from N(2)-formyl-N(1)-(5-phospho-D-ribosyl)glycinamide: step 1/2. In terms of biological role, part of the phosphoribosylformylglycinamidine synthase complex involved in the purines biosynthetic pathway. Catalyzes the ATP-dependent conversion of formylglycinamide ribonucleotide (FGAR) and glutamine to yield formylglycinamidine ribonucleotide (FGAM) and glutamate. The FGAM synthase complex is composed of three subunits. PurQ produces an ammonia molecule by converting glutamine to glutamate. PurL transfers the ammonia molecule to FGAR to form FGAM in an ATP-dependent manner. PurS interacts with PurQ and PurL and is thought to assist in the transfer of the ammonia molecule from PurQ to PurL. In Helicobacter hepaticus (strain ATCC 51449 / 3B1), this protein is Phosphoribosylformylglycinamidine synthase subunit PurL.